The primary structure comprises 208 residues: Thymidylate kinase (208 aa).

Position 10–17 (10–17 (GPEGSGKT)) interacts with ATP.

It belongs to the thymidylate kinase family.

The catalysed reaction is dTMP + ATP = dTDP + ADP. Phosphorylation of dTMP to form dTDP in both de novo and salvage pathways of dTTP synthesis. The polypeptide is Thymidylate kinase (Bacillus mycoides (strain KBAB4) (Bacillus weihenstephanensis)).